Consider the following 617-residue polypeptide: Dihydroxy-acid dehydratase (617 aa).

Aspartate 81 contacts Mg(2+). Cysteine 122 is a [2Fe-2S] cluster binding site. Mg(2+)-binding residues include aspartate 123 and lysine 124. The residue at position 124 (lysine 124) is an N6-carboxylysine. Cysteine 197 contacts [2Fe-2S] cluster. Mg(2+) is bound at residue glutamate 494. Serine 520 (proton acceptor) is an active-site residue.

It belongs to the IlvD/Edd family. Homodimer. The cofactor is [2Fe-2S] cluster. Mg(2+) serves as cofactor.

It catalyses the reaction (2R)-2,3-dihydroxy-3-methylbutanoate = 3-methyl-2-oxobutanoate + H2O. The catalysed reaction is (2R,3R)-2,3-dihydroxy-3-methylpentanoate = (S)-3-methyl-2-oxopentanoate + H2O. It participates in amino-acid biosynthesis; L-isoleucine biosynthesis; L-isoleucine from 2-oxobutanoate: step 3/4. Its pathway is amino-acid biosynthesis; L-valine biosynthesis; L-valine from pyruvate: step 3/4. Its function is as follows. Functions in the biosynthesis of branched-chain amino acids. Catalyzes the dehydration of (2R,3R)-2,3-dihydroxy-3-methylpentanoate (2,3-dihydroxy-3-methylvalerate) into 2-oxo-3-methylpentanoate (2-oxo-3-methylvalerate) and of (2R)-2,3-dihydroxy-3-methylbutanoate (2,3-dihydroxyisovalerate) into 2-oxo-3-methylbutanoate (2-oxoisovalerate), the penultimate precursor to L-isoleucine and L-valine, respectively. This chain is Dihydroxy-acid dehydratase, found in Parafrankia sp. (strain EAN1pec).